A 197-amino-acid chain; its full sequence is Small ribosomal subunit protein uS10c (197 aa).

The N-terminal 60 residues, 1–60 (MATSSLSTIVFSPLALSNSSSFPNKPQVSNLSLHSSLSNLRRTLSHSSPSSSSSSNVRVF), are a transit peptide targeting the chloroplast. Residues 67–91 (ESQETGPESYVEEGSETSALGIGAD) form a disordered region.

Belongs to the universal ribosomal protein uS10 family. Part of the 30S ribosomal subunit.

Its subcellular location is the plastid. It is found in the chloroplast. The protein is Small ribosomal subunit protein uS10c (RPS10) of Mesembryanthemum crystallinum (Common ice plant).